The primary structure comprises 298 residues: Probable tRNA(His) guanylyltransferase (298 aa).

Residues aspartate 58, glycine 59, and aspartate 105 each contribute to the Mg(2+) site. Residues 58–63 (DGRNFH) and 104–105 (SD) each bind GTP.

It belongs to the tRNA(His) guanylyltransferase family. Homotetramer. Interacts with MFN1 and MFN2; functions as a guanyl-nucleotide exchange factor/GEF for MFN2 and also probably MFN1. Requires Mg(2+) as cofactor. As to expression, expressed in many tissues.

The protein resides in the cytoplasm. It localises to the mitochondrion outer membrane. It catalyses the reaction a 5'-end ribonucleotide-tRNA(His) + GTP + ATP + H2O = a 5'-end phospho-guanosine-ribonucleotide-tRNA(His) + AMP + 2 diphosphate + H(+). Functionally, adds a GMP to the 5'-end of tRNA(His) after transcription and RNase P cleavage. This step is essential for proper recognition of the tRNA and for the fidelity of protein synthesis. Also functions as a guanyl-nucleotide exchange factor/GEF for the MFN1 and MFN2 mitofusins thereby regulating mitochondrial fusion. By regulating both mitochondrial dynamics and bioenergetic function, it contributes to cell survival following oxidative stress. The polypeptide is Probable tRNA(His) guanylyltransferase (THG1L) (Homo sapiens (Human)).